Here is a 457-residue protein sequence, read N- to C-terminus: ADP-dependent glucose/glucosamine kinase (457 aa).

One can recognise an ADPK domain in the interval 5 to 457 (TNWESLYEKA…SAFVSEFSLH (453 aa)). D-glucose contacts are provided by residues Asp-37, Glu-91, 115–116 (GQ), and His-179. Glu-269 provides a ligand contact to Mg(2+). Asn-295 serves as a coordination point for ADP. Glu-298 contributes to the Mg(2+) binding site. Residues 345–346 (HT), Val-432, and Gly-442 each bind ADP. Asp-443 contacts D-glucose. Asp-443 contacts Mg(2+). Residue Asp-443 is the Proton acceptor of the active site.

This sequence belongs to the ADP-dependent glucokinase family. It depends on Mg(2+) as a cofactor.

The protein resides in the cytoplasm. The catalysed reaction is D-glucose + ADP = D-glucose 6-phosphate + AMP + H(+). The enzyme catalyses D-glucosamine + ADP = D-glucosamine 6-phosphate + AMP + H(+). The protein operates within carbohydrate degradation; glycolysis. Its activity is regulated as follows. Inhibited by 8-bromoadenosine phosphate (8-Br-AMP). Functionally, catalyzes the ADP-dependent phosphorylation of D-glucose to D-glucose 6-phosphate and glucosamine to glucosamine 6-phosphate. This chain is ADP-dependent glucose/glucosamine kinase, found in Pyrococcus horikoshii (strain ATCC 700860 / DSM 12428 / JCM 9974 / NBRC 100139 / OT-3).